The chain runs to 303 residues: Aspartate carbamoyltransferase catalytic subunit (303 aa).

Carbamoyl phosphate is bound by residues Arg54 and Thr55. Lys83 provides a ligand contact to L-aspartate. Carbamoyl phosphate contacts are provided by Arg104, His132, and Gln135. Arg164 and Arg226 together coordinate L-aspartate. Carbamoyl phosphate-binding residues include Leu265 and Pro266.

Belongs to the aspartate/ornithine carbamoyltransferase superfamily. ATCase family. In terms of assembly, heterooligomer of catalytic and regulatory chains.

It carries out the reaction carbamoyl phosphate + L-aspartate = N-carbamoyl-L-aspartate + phosphate + H(+). Its pathway is pyrimidine metabolism; UMP biosynthesis via de novo pathway; (S)-dihydroorotate from bicarbonate: step 2/3. Its function is as follows. Catalyzes the condensation of carbamoyl phosphate and aspartate to form carbamoyl aspartate and inorganic phosphate, the committed step in the de novo pyrimidine nucleotide biosynthesis pathway. The protein is Aspartate carbamoyltransferase catalytic subunit of Methanocorpusculum labreanum (strain ATCC 43576 / DSM 4855 / Z).